Consider the following 214-residue polypeptide: Calcineurin B homologous protein 3 (214 aa).

The tract at residues 1-20 (MGAAHSASEEVRELEGKTGF) is disordered. Gly2 is lipidated: N-myristoyl glycine. Residues 7–16 (ASEEVRELEG) are compositionally biased toward basic and acidic residues. In terms of domain architecture, EF-hand spans 110–145 (SRKEKLRFLFHMYDSDSDGRITLEEYRNVVEELLSG). The Ca(2+) site is built by Asp123, Asp125, Asp127, Arg129, and Glu134.

This sequence belongs to the calcineurin regulatory subunit family. CHP subfamily. In terms of assembly, monomer. Homodimer; disulfide-linked. Interacts with SLC9A1/NHE1; the interaction enables an optimal Na(+)/H(+) exchange activity. Expressed in mature megakaryocytes and polymorphonuclear granulocytes (at protein level). Abundantly expressed in heart. Also expressed at a lower level in adult testis and salivary gland, and in the placenta.

It is found in the nucleus. Its subcellular location is the cytoplasm. It localises to the membrane. The protein resides in the cell membrane. The protein localises to the cell projection. It is found in the lamellipodium. Its subcellular location is the ruffle membrane. In terms of biological role, functions as an integral cofactor in cell pH regulation by controlling plasma membrane-type Na(+)/H(+) exchange activity. Promotes the maturation, transport, cell surface stability and exchange activity of SLC9A1/NHE1 at the plasma membrane. Promotes the induction of hematopoietic stem cell differentiation toward megakaryocytic lineage. Essential for the coupling of ERK cascade activation with the expression of ETS family genes in megakaryocytic differentiation. Also involved in granulocytic differentiation in a ERK-dependent manner. Inhibits the phosphatase activity of calcineurin. The sequence is that of Calcineurin B homologous protein 3 (TESC) from Homo sapiens (Human).